We begin with the raw amino-acid sequence, 227 residues long: GFP-like non-fluorescent chromoprotein (227 aa).

A cross-link (5-imidazolinone (Ala-Gly)) is located at residues 63–65 (AYG). At Tyr-64 the chain carries 2,3-didehydrotyrosine.

Belongs to the GFP family. In terms of assembly, homotetramer. In terms of processing, contains a chromophore consisting of modified amino acid residues. The chromophore is formed by autocatalytic backbone condensation between Xaa-N and Gly-(N+2), and oxidation of Tyr-(N+1) to didehydrotyrosine. Maturation of the chromophore requires nothing other than molecular oxygen. The precise stereochemistry of the tyrosine has not been determined.

In terms of biological role, non-fluorescent pigment protein that is mauve in color. The wild-type form is non-fluorescent. The protein is GFP-like non-fluorescent chromoprotein of Condylactis gigantea (Giant Caribbean anemone).